The chain runs to 248 residues: Probable transcriptional regulatory protein RHE_CH03475 (248 aa).

This sequence belongs to the TACO1 family.

The protein localises to the cytoplasm. This chain is Probable transcriptional regulatory protein RHE_CH03475, found in Rhizobium etli (strain ATCC 51251 / DSM 11541 / JCM 21823 / NBRC 15573 / CFN 42).